The chain runs to 167 residues: Envelope glycoprotein L (167 aa).

A signal peptide spans 1–20 (MGIFALFAVLWTTLLVTSHA). The interval 18–131 (SHAYVALPCC…ADSSIHNVNI (114 aa)) is interaction with gH. Over residues 142–154 (RTGSVSGSQTRAK) the composition is skewed to polar residues. Residues 142–167 (RTGSVSGSQTRAKSSSRRAHAGQKGK) are disordered. A compositionally biased stretch (basic residues) spans 155 to 167 (SSSRRAHAGQKGK).

It belongs to the herpesviridae glycoprotein L family. In terms of assembly, interacts with glycoprotein H (gH); this interaction is necessary for the correct processing and cell surface expression of gH. The heterodimer gH/gL seems to interact with gB trimers during fusion. When in complex with gH, interacts with host EPHA2; this interaction triggers EPHA2 phosphorylation and endocytosis, allowing virus entry.

The protein resides in the virion membrane. The protein localises to the host cell membrane. Its subcellular location is the host Golgi apparatus. It is found in the host trans-Golgi network. In terms of biological role, the heterodimer glycoprotein H-glycoprotein L is required for the fusion of viral and plasma membranes leading to virus entry into the host cell. Acts as a functional inhibitor of gH and maintains gH in an inhibited form. Upon binding to host integrins, gL dissociates from gH leading to activation of the viral fusion glycoproteins gB and gH. Targets heparan sulfate proteoglycans of the syndecan family as well as host EPHA2 to promote viral entry. This is Envelope glycoprotein L from Human herpesvirus 8 type P (isolate GK18) (HHV-8).